The primary structure comprises 512 residues: Kelch repeat protein C2 (512 aa).

The BTB domain maps to 2 to 67 (ESVIFSINGE…IRWKKINITI (66 aa)). The region spanning 102 to 176 (CIRMFNFSKR…LLKWIHKNPN (75 aa)) is the BACK domain. Kelch repeat units lie at residues 216-261 (IKHN…LHNC), 262-307 (LYII…VNDG), 309-354 (LYVI…FVND), 356-403 (IYVM…EYDG), 405-449 (IYVI…SCGD), and 452-498 (LIIA…THKS).

The protein belongs to the poxviruses Kelch family.

The sequence is that of Kelch repeat protein C2 from Vaccinia virus (strain Western Reserve) (VACV).